Consider the following 148-residue polypeptide: Large ribosomal subunit protein bL9 (148 aa).

The protein belongs to the bacterial ribosomal protein bL9 family.

Binds to the 23S rRNA. The sequence is that of Large ribosomal subunit protein bL9 from Staphylococcus aureus (strain Newman).